A 442-amino-acid chain; its full sequence is Prenyltransferase nscD (442 aa).

The protein belongs to the tryptophan dimethylallyltransferase family.

Its pathway is secondary metabolite biosynthesis. Functionally, prenyltransferase; part of the gene cluster that mediates the biosynthesis of neosartoricin B, a prenylated anthracenone that probably exhibits T-cell antiproliferative activity, suggestive of a physiological role as an immunosuppressive agent. The non-reducing polyketide synthase nscA probably synthesizes and cyclizes the decaketide backbone. The hydrolase nscB then mediates the product release through hydrolysis followed by spontaneous decarboxylation. The prenyltransferase nscD catalyzes the addition of the dimethylallyl group to the aromatic C5. The FAD-dependent monooxygenase nscC is then responsible for the stereospecific hydroxylation at C2. Neosartoricin B can be converted into two additional compounds neosartoricins C and D. Neosartoricin C is a spirocyclic compound that is cyclized through the attack of C3 hydroxyl on C14, followed by dehydration. On the other hand, neosartoricin D is a further cyclized compound in which attack of C2 on C14 in neosartoricin C results in the formation of the acetal-containing dioxabicyclo-octanone ring. Both of these compounds are novel and possibly represent related metabolites of the gene cluster. The chain is Prenyltransferase nscD from Trichophyton verrucosum (strain HKI 0517).